A 441-amino-acid chain; its full sequence is Probable cytosolic Fe-S cluster assembly factor v1g210509 (441 aa).

Cys24, Cys72, Cys75, Cys78, Cys196, Cys252, and Cys401 together coordinate [4Fe-4S] cluster.

Belongs to the NARF family.

Functionally, component of the cytosolic iron-sulfur (Fe/S) protein assembly machinery. Required for maturation of extramitochondrial Fe/S proteins. The polypeptide is Probable cytosolic Fe-S cluster assembly factor v1g210509 (Nematostella vectensis (Starlet sea anemone)).